Consider the following 264-residue polypeptide: Thymidylate synthase (264 aa).

Residues R21 and 126-127 each bind dUMP; that span reads RR. The Nucleophile role is filled by C146. Residues 166–169, N177, and 207–209 contribute to the dUMP site; these read RSAD and HLY. D169 provides a ligand contact to (6R)-5,10-methylene-5,6,7,8-tetrahydrofolate. A263 is a binding site for (6R)-5,10-methylene-5,6,7,8-tetrahydrofolate.

Belongs to the thymidylate synthase family. Bacterial-type ThyA subfamily. Homodimer.

It is found in the cytoplasm. It catalyses the reaction dUMP + (6R)-5,10-methylene-5,6,7,8-tetrahydrofolate = 7,8-dihydrofolate + dTMP. Its pathway is pyrimidine metabolism; dTTP biosynthesis. Functionally, catalyzes the reductive methylation of 2'-deoxyuridine-5'-monophosphate (dUMP) to 2'-deoxythymidine-5'-monophosphate (dTMP) while utilizing 5,10-methylenetetrahydrofolate (mTHF) as the methyl donor and reductant in the reaction, yielding dihydrofolate (DHF) as a by-product. This enzymatic reaction provides an intracellular de novo source of dTMP, an essential precursor for DNA biosynthesis. This chain is Thymidylate synthase, found in Halorhodospira halophila (strain DSM 244 / SL1) (Ectothiorhodospira halophila (strain DSM 244 / SL1)).